A 118-amino-acid polypeptide reads, in one-letter code: Small ribosomal subunit protein uS13 (118 aa).

The segment at 94-118 (SLPLRGQRTKTNARTRKGPRKPIKK) is disordered.

Belongs to the universal ribosomal protein uS13 family. Part of the 30S ribosomal subunit. Forms a loose heterodimer with protein S19. Forms two bridges to the 50S subunit in the 70S ribosome.

Its function is as follows. Located at the top of the head of the 30S subunit, it contacts several helices of the 16S rRNA. In the 70S ribosome it contacts the 23S rRNA (bridge B1a) and protein L5 of the 50S subunit (bridge B1b), connecting the 2 subunits; these bridges are implicated in subunit movement. Contacts the tRNAs in the A and P-sites. This Alteromonas mediterranea (strain DSM 17117 / CIP 110805 / LMG 28347 / Deep ecotype) protein is Small ribosomal subunit protein uS13.